Reading from the N-terminus, the 440-residue chain is MDQGTMGYQFENWATTYSCEPELYFEPTTVEEIRQILELANQRNKRVKVVGCGHSPSDIACTDNYLVRLNKLNRILQVDKERKWITAEAGILLSDLNEKLDALGLALSNIGAVSDVALGGVIGTGTHNTGIQHGILATQIVAMTLMTAAGDTLECSNTVNREIFQATRLHLGSLGVVLNVTIQCVPAFRIHLQQFPKTLTEVLGDLDTHLKQSEYFRFFWFPHTDKVTVFYADRTNKPIKTTSSWFWNYAIGYYLLEFLLWISVFVPRLVPWINRLFYWLLYSAKAEQVKRSDKAFNFDCLFKQHVSDWALPIKQTRAALEQLKDWLDNNPNVRAHFPVEVRFVRADDILLSPCYRQDSCYINIIMYRPYGKEVPREGYWAMYEEIMKRNGGRPHWAKAHSLLRQDFEKIYPAFHKFCSIREELDPSGMFLNNYLEKTFF.

In terms of domain architecture, FAD-binding PCMH-type spans 17–187; the sequence is YSCEPELYFE…LNVTIQCVPA (171 aa). His-54 carries the post-translational modification Pros-8alpha-FAD histidine. Residues 245-267 traverse the membrane as a helical segment; sequence WFWNYAIGYYLLEFLLWISVFVP.

The protein belongs to the oxygen-dependent FAD-linked oxidoreductase family. The cofactor is FAD.

Its subcellular location is the microsome membrane. It is found in the endoplasmic reticulum membrane. It carries out the reaction L-gulono-1,4-lactone + O2 = L-ascorbate + H2O2 + H(+). The protein operates within cofactor biosynthesis; L-ascorbate biosynthesis via UDP-alpha-D-glucuronate pathway; L-ascorbate from UDP-alpha-D-glucuronate: step 4/4. Functionally, oxidizes L-gulono-1,4-lactone to hydrogen peroxide and L-xylo-hexulonolactone which spontaneously isomerizes to L-ascorbate. This chain is L-gulonolactone oxidase (GULO), found in Scyliorhinus torazame (Cloudy catshark).